The primary structure comprises 443 residues: Xaa-Pro dipeptidase (443 aa).

Mn(2+)-binding residues include aspartate 246, aspartate 257, histidine 339, glutamate 384, and glutamate 423.

The protein belongs to the peptidase M24B family. Bacterial-type prolidase subfamily. Mn(2+) serves as cofactor.

The catalysed reaction is Xaa-L-Pro dipeptide + H2O = an L-alpha-amino acid + L-proline. Its function is as follows. Splits dipeptides with a prolyl residue in the C-terminal position. This chain is Xaa-Pro dipeptidase, found in Shigella flexneri serotype 5b (strain 8401).